Reading from the N-terminus, the 281-residue chain is Lectin (281 aa).

A signal peptide spans 1-26 (MATYKLCSVLALSLTLFLLILNKVNS). Residues Asn-43 and Asn-139 are each glycosylated (N-linked (GlcNAc...) asparagine). A propeptide spanning residues 269–281 (AVIPTSNHNTFAI) is cleaved from the precursor.

Belongs to the leguminous lectin family. In terms of assembly, homodimer. In terms of processing, a minor C-terminal proteolytic processing site is observed at position 268.

Functionally, galactose and N-acetyllactosamine specific lectin. Binds to the H-2 blood type determinant fucosyl-N-acetyllactosamine. This is Lectin from Erythrina corallodendron (Coral tree).